Reading from the N-terminus, the 236-residue chain is Small ribosomal subunit protein uS2c (236 aa).

As to quaternary structure, component of the chloroplast small ribosomal subunit (SSU). Mature 70S chloroplast ribosomes of higher plants consist of a small (30S) and a large (50S) subunit. The 30S small subunit contains 1 molecule of ribosomal RNA (16S rRNA) and 24 different proteins. The 50S large subunit contains 3 rRNA molecules (23S, 5S and 4.5S rRNA) and 33 different proteins.

It localises to the plastid. It is found in the chloroplast. In terms of biological role, component of the chloroplast ribosome (chloro-ribosome), a dedicated translation machinery responsible for the synthesis of chloroplast genome-encoded proteins, including proteins of the transcription and translation machinery and components of the photosynthetic apparatus. This is Small ribosomal subunit protein uS2c (rps2) from Spinacia oleracea (Spinach).